Reading from the N-terminus, the 385-residue chain is ATP phosphoribosyltransferase regulatory subunit (385 aa).

This sequence belongs to the class-II aminoacyl-tRNA synthetase family. HisZ subfamily. In terms of assembly, heteromultimer composed of HisG and HisZ subunits.

Its subcellular location is the cytoplasm. Its pathway is amino-acid biosynthesis; L-histidine biosynthesis; L-histidine from 5-phospho-alpha-D-ribose 1-diphosphate: step 1/9. Functionally, required for the first step of histidine biosynthesis. May allow the feedback regulation of ATP phosphoribosyltransferase activity by histidine. The sequence is that of ATP phosphoribosyltransferase regulatory subunit from Laribacter hongkongensis (strain HLHK9).